The chain runs to 1050 residues: Probable beta-glucosidase E (1050 aa).

The segment at 1-87 (MPPPDSNPGS…RSSSTNGGHN (87 aa)) is disordered. Over 1 to 174 (MPPPDSNPGS…VKYARIWRRT (174 aa)) the chain is Cytoplasmic. Positions 11 to 20 (FRDHLKHDNK) are enriched in basic and acidic residues. Low complexity predominate over residues 47-56 (SPRSASASSS). Over residues 78–87 (RSSSTNGGHN) the composition is skewed to polar residues. Residues 175-195 (LVVVIVALALLVWGFLRFTAA) form a helical; Signal-anchor for type II membrane protein membrane-spanning segment. Over 196 to 1050 (QRQGPKVWPM…SRDLPLQAKY (855 aa)) the chain is Extracellular. Asparagine 236, asparagine 244, asparagine 300, and asparagine 430 each carry an N-linked (GlcNAc...) asparagine glycan. Aspartate 458 is an active-site residue. N-linked (GlcNAc...) asparagine glycans are attached at residues asparagine 501, asparagine 540, asparagine 605, asparagine 884, asparagine 920, asparagine 929, and asparagine 993.

It belongs to the glycosyl hydrolase 3 family.

The protein localises to the cell membrane. It catalyses the reaction Hydrolysis of terminal, non-reducing beta-D-glucosyl residues with release of beta-D-glucose.. Its pathway is glycan metabolism; cellulose degradation. Functionally, beta-glucosidases are one of a number of cellulolytic enzymes involved in the degradation of cellulosic biomass. Catalyzes the last step releasing glucose from the inhibitory cellobiose. The sequence is that of Probable beta-glucosidase E (bglE) from Aspergillus clavatus (strain ATCC 1007 / CBS 513.65 / DSM 816 / NCTC 3887 / NRRL 1 / QM 1276 / 107).